A 502-amino-acid polypeptide reads, in one-letter code: D-alanine--D-alanyl carrier protein ligase (502 aa).

Residue 150–151 (TS) coordinates ATP. Asp195 contacts D-alanine. ATP is bound at residue 290 to 295 (NTYGPT). Val299 lines the D-alanine pocket. ATP is bound by residues Asp381 and Lys490. Residue Lys490 coordinates D-alanine.

Belongs to the ATP-dependent AMP-binding enzyme family. DltA subfamily.

The protein resides in the cytoplasm. It carries out the reaction holo-[D-alanyl-carrier protein] + D-alanine + ATP = D-alanyl-[D-alanyl-carrier protein] + AMP + diphosphate. The protein operates within cell wall biogenesis; lipoteichoic acid biosynthesis. Its function is as follows. Catalyzes the first step in the D-alanylation of lipoteichoic acid (LTA), the activation of D-alanine and its transfer onto the D-alanyl carrier protein (Dcp) DltC. In an ATP-dependent two-step reaction, forms a high energy D-alanyl-AMP intermediate, followed by transfer of the D-alanyl residue as a thiol ester to the phosphopantheinyl prosthetic group of the Dcp. D-alanylation of LTA plays an important role in modulating the properties of the cell wall in Gram-positive bacteria, influencing the net charge of the cell wall. In Bacillus licheniformis (strain ATCC 14580 / DSM 13 / JCM 2505 / CCUG 7422 / NBRC 12200 / NCIMB 9375 / NCTC 10341 / NRRL NRS-1264 / Gibson 46), this protein is D-alanine--D-alanyl carrier protein ligase.